We begin with the raw amino-acid sequence, 235 residues long: Ribosomal RNA large subunit methyltransferase E (235 aa).

S-adenosyl-L-methionine contacts are provided by G76, W78, D99, D115, and D139. K179 (proton acceptor) is an active-site residue.

Belongs to the class I-like SAM-binding methyltransferase superfamily. RNA methyltransferase RlmE family.

The protein resides in the cytoplasm. It carries out the reaction uridine(2552) in 23S rRNA + S-adenosyl-L-methionine = 2'-O-methyluridine(2552) in 23S rRNA + S-adenosyl-L-homocysteine + H(+). Its function is as follows. Specifically methylates the uridine in position 2552 of 23S rRNA at the 2'-O position of the ribose in the fully assembled 50S ribosomal subunit. The chain is Ribosomal RNA large subunit methyltransferase E from Rhodopseudomonas palustris (strain BisB5).